The following is a 384-amino-acid chain: Galactokinase (384 aa).

Position 34–37 (34–37) interacts with substrate; that stretch reads EHTD. 123–129 provides a ligand contact to ATP; the sequence is SSGLSSS. Mg(2+) is bound by residues Ser129 and Glu161. Asp173 acts as the Proton acceptor in catalysis. Tyr222 lines the substrate pocket.

The protein belongs to the GHMP kinase family. GalK subfamily.

The protein resides in the cytoplasm. It catalyses the reaction alpha-D-galactose + ATP = alpha-D-galactose 1-phosphate + ADP + H(+). It functions in the pathway carbohydrate metabolism; galactose metabolism. Functionally, catalyzes the transfer of the gamma-phosphate of ATP to D-galactose to form alpha-D-galactose-1-phosphate (Gal-1-P). This Actinobacillus pleuropneumoniae serotype 3 (strain JL03) protein is Galactokinase.